We begin with the raw amino-acid sequence, 90 residues long: Serine-rich and transmembrane domain-containing 2 (90 aa).

N-linked (GlcNAc...) asparagine glycosylation occurs at N11. Residues 38 to 58 traverse the membrane as a helical segment; it reads YVGLFLSLLAILLILLFTMLL. Residues 69 to 90 form a disordered region; it reads SDSTESVPQFTDVEMQSRIPTP.

It is found in the membrane. The polypeptide is Serine-rich and transmembrane domain-containing 2 (Homo sapiens (Human)).